Consider the following 151-residue polypeptide: Protein SprT-like (151 aa).

Residues 6 to 147 (LQRMVENLSE…GHCNGKLRMK (142 aa)) form the SprT-like domain. His67 is a Zn(2+) binding site. Glu68 is an active-site residue. His71 serves as a coordination point for Zn(2+).

This sequence belongs to the SprT family. Zn(2+) serves as cofactor.

The protein resides in the cytoplasm. The polypeptide is Protein SprT-like (Staphylococcus aureus (strain MRSA252)).